The following is a 284-amino-acid chain: 4-hydroxy-3-methylbut-2-enyl diphosphate reductase (284 aa).

C12 provides a ligand contact to [4Fe-4S] cluster. The (2E)-4-hydroxy-3-methylbut-2-enyl diphosphate site is built by H40 and H72. The dimethylallyl diphosphate site is built by H40 and H72. 2 residues coordinate isopentenyl diphosphate: H40 and H72. A [4Fe-4S] cluster-binding site is contributed by C94. Position 122 (H122) interacts with (2E)-4-hydroxy-3-methylbut-2-enyl diphosphate. H122 contacts dimethylallyl diphosphate. H122 contributes to the isopentenyl diphosphate binding site. The active-site Proton donor is E124. T161 provides a ligand contact to (2E)-4-hydroxy-3-methylbut-2-enyl diphosphate. C193 is a [4Fe-4S] cluster binding site. The (2E)-4-hydroxy-3-methylbut-2-enyl diphosphate site is built by S221, N223, and S264. Residues S221, N223, and S264 each contribute to the dimethylallyl diphosphate site. 3 residues coordinate isopentenyl diphosphate: S221, N223, and S264.

It belongs to the IspH family. The cofactor is [4Fe-4S] cluster.

The catalysed reaction is isopentenyl diphosphate + 2 oxidized [2Fe-2S]-[ferredoxin] + H2O = (2E)-4-hydroxy-3-methylbut-2-enyl diphosphate + 2 reduced [2Fe-2S]-[ferredoxin] + 2 H(+). The enzyme catalyses dimethylallyl diphosphate + 2 oxidized [2Fe-2S]-[ferredoxin] + H2O = (2E)-4-hydroxy-3-methylbut-2-enyl diphosphate + 2 reduced [2Fe-2S]-[ferredoxin] + 2 H(+). It participates in isoprenoid biosynthesis; dimethylallyl diphosphate biosynthesis; dimethylallyl diphosphate from (2E)-4-hydroxy-3-methylbutenyl diphosphate: step 1/1. Its pathway is isoprenoid biosynthesis; isopentenyl diphosphate biosynthesis via DXP pathway; isopentenyl diphosphate from 1-deoxy-D-xylulose 5-phosphate: step 6/6. In terms of biological role, catalyzes the conversion of 1-hydroxy-2-methyl-2-(E)-butenyl 4-diphosphate (HMBPP) into a mixture of isopentenyl diphosphate (IPP) and dimethylallyl diphosphate (DMAPP). Acts in the terminal step of the DOXP/MEP pathway for isoprenoid precursor biosynthesis. This Dehalococcoides mccartyi (strain CBDB1) protein is 4-hydroxy-3-methylbut-2-enyl diphosphate reductase.